We begin with the raw amino-acid sequence, 803 residues long: Volume-regulated anion channel subunit LRRC8C (803 aa).

Residues 1 to 22 (MIPVTEFRQFSEQQPAFRVLKP) lie on the Cytoplasmic side of the membrane. Residues 23–43 (WWDVFTDYLSVAMLMIGVFGC) form a helical membrane-spanning segment. The Extracellular portion of the chain corresponds to 44–125 (TLQVMQDKII…YERALHWYAK (82 aa)). Intrachain disulfides connect Cys54-Cys308 and Cys115-Cys293. N-linked (GlcNAc...) asparagine glycosylation is found at Asn64 and Asn70. A helical membrane pass occupies residues 126–146 (YFPYLVLIHTLVFMLCSNFWF). Residues 147–266 (KFPGSSSKIE…ILYAMYVRQT (120 aa)) lie on the Cytoplasmic side of the membrane. The segment at 177 to 211 (EVSGEDSEEKDNRKNNMNRSNTIQSGPEGSLVKSQ) is disordered. Positions 191–211 (NNMNRSNTIQSGPEGSLVKSQ) are enriched in polar residues. Residues Ser212 and Ser215 each carry the phosphoserine modification. Residues 267 to 287 (VLKVIKFLIIIAYNSALVSKV) traverse the membrane as a helical segment. The Extracellular portion of the chain corresponds to 288 to 320 (QFTVDCNVDIQDMTGYKNFSCNHTMAHLFSKLS). A helical transmembrane segment spans residues 321–341 (FCYLCFVSIYGLTCLYTLYWL). At 342-803 (FYRSLREYSF…SDVREQMKAD (462 aa)) the chain is on the cytoplasmic side. LRR repeat units lie at residues 397 to 420 (ENKL…KLQT), 421 to 443 (NAHN…VFEI), 446 to 466 (LQSL…IAQL), 467 to 488 (DNLQ…ALSF), 490 to 513 (KENL…MYGL), 515 to 537 (NLEE…TLES), 541 to 563 (LKSL…VVDV), 565 to 587 (SHLQ…NLKK), 588 to 611 (MTNL…VFSL), 613 to 635 (SLQE…SFQH), 637 to 659 (RKLT…IKKL), 660 to 682 (TSLE…LFLC), 684 to 705 (KIRY…IGVL), 706 to 728 (QSLQ…LYFC), 730 to 751 (KLKT…IGNL), 752 to 774 (LFLS…LGDC), and 776 to 799 (ALKR…VREQ).

It belongs to the LRRC8 family. As to quaternary structure, heterohexamer; oligomerizes with other LRRC8 proteins (LRRC8A, LRRC8B, LRRC8D and/or LRRC8E) to form a heterohexamer. Homoheptamer; inactive, likely because it is not targeted to the plasma membrane in the absence of LRRC8A. In vivo, the subunit composition may depend primarily on expression levels, and heterooligomeric channels containing various proportions of the different LRRC8 proteins may coexist.

It localises to the cell membrane. The protein localises to the endoplasmic reticulum membrane. The catalysed reaction is chloride(in) = chloride(out). The enzyme catalyses iodide(out) = iodide(in). It carries out the reaction taurine(out) = taurine(in). It catalyses the reaction 2',3'-cGAMP(out) = 2',3'-cGAMP(in). In terms of biological role, non-essential component of the volume-regulated anion channel (VRAC, also named VSOAC channel), an anion channel required to maintain a constant cell volume in response to extracellular or intracellular osmotic changes. The VRAC channel conducts iodide better than chloride and can also conduct organic osmolytes like taurine. Plays a redundant role in the efflux of amino acids, such as aspartate and glutamate, in response to osmotic stress. The VRAC channel also mediates transport of immunoreactive cyclic dinucleotide GMP-AMP (2'-3'-cGAMP), an immune messenger produced in response to DNA virus in the cytosol. Channel activity requires LRRC8A plus at least one other family member (LRRC8B, LRRC8C, LRRC8D or LRRC8E); channel characteristics depend on the precise subunit composition. In Rattus norvegicus (Rat), this protein is Volume-regulated anion channel subunit LRRC8C.